The primary structure comprises 303 residues: Beta-carotene 3-hydroxylase 2, chloroplastic (303 aa).

Residues 1–52 (MAAGLSTIAVTLKPLNRSSFSANHPISTAVFPPSLRFNGFRRRKILTVCFVV) constitute a chloroplast transit peptide. A run of 2 helical transmembrane segments spans residues 96–116 (YLIA…MAVY) and 130–150 (VLEM…MEFW). In terms of domain architecture, Fatty acid hydroxylase spans 143-270 (AAVGMEFWAR…KFKGVPYGLF (128 aa)). Residues 155 to 160 (HRALWH) carry the Histidine box-1 motif. A Histidine box-2 motif is present at residues 165–171 (NMHESHH). Transmembrane regions (helical) follow at residues 180–200 (LNDV…YYGF) and 206–226 (VPGL…AYMF). The Histidine box-3 motif lies at 228–233 (HDGLVH). The Histidine box-4 motif lies at 254–258 (HQLHH).

Belongs to the sterol desaturase family. Homodimer. Expressed in leaves, flowers, stems, roots and siliques.

Its subcellular location is the plastid. It is found in the chloroplast membrane. It carries out the reaction all-trans-beta-carotene + 4 reduced [2Fe-2S]-[ferredoxin] + 2 O2 + 4 H(+) = all-trans-zeaxanthin + 4 oxidized [2Fe-2S]-[ferredoxin] + 2 H2O. Functionally, nonheme diiron monooxygenase involved in the biosynthesis of xanthophylls. Specific for beta-ring hydroxylations of beta-carotene. Also has a low activity toward the beta- and epsilon-rings of alpha-carotene. No activity with acyclic carotenoids such as lycopene and neurosporene. Uses ferredoxin as an electron donor. This is Beta-carotene 3-hydroxylase 2, chloroplastic (BETA-OHASE 2) from Arabidopsis thaliana (Mouse-ear cress).